A 760-amino-acid chain; its full sequence is Acetyl-CoA decarbonylase/synthase complex subunit alpha 1 (760 aa).

[4Fe-4S] cluster is bound by residues C56, C59, C60, C62, C67, and C77. H100 contacts CO. [Ni-4Fe-4S] cluster-binding residues include H231, C259, and C298. 2 4Fe-4S ferredoxin-type domains span residues 381-410 and 418-450; these read KKLQ…VEAM and FEGL…MIED. [4Fe-4S] cluster-binding residues include C390, C393, C396, C400, C428, C431, C434, and C438. [Ni-4Fe-4S] cluster contacts are provided by C496, C525, and C560.

Belongs to the Ni-containing carbon monoxide dehydrogenase family. As to quaternary structure, heterotetramer of two alpha and two epsilon subunits. The ACDS complex is made up of alpha, epsilon, beta, gamma and delta subunits with a probable stoichiometry of (alpha(2)epsilon(2))(4)-beta(8)-(gamma(1)delta(1))(8). Requires [4Fe-4S] cluster as cofactor. [Ni-4Fe-4S] cluster serves as cofactor.

It catalyses the reaction CO + 2 oxidized [2Fe-2S]-[ferredoxin] + H2O = 2 reduced [2Fe-2S]-[ferredoxin] + CO2 + 2 H(+). Functionally, part of the ACDS complex that catalyzes the reversible cleavage of acetyl-CoA, allowing autotrophic growth from CO(2). The alpha-epsilon subcomponent functions as a carbon monoxide dehydrogenase. The sequence is that of Acetyl-CoA decarbonylase/synthase complex subunit alpha 1 from Methanopyrus kandleri (strain AV19 / DSM 6324 / JCM 9639 / NBRC 100938).